The chain runs to 634 residues: uncharacterized protein (634 aa).

The N-terminal stretch at 1–40 (MWLQQRLKGLPGLLSSSWARRLLCLLGLLVLLLWFASSGA) is a signal peptide. The Extracellular segment spans residues 41 to 589 (RRAAGGLHLP…DEHMAQQDPG (549 aa)). N-linked (GlcNAc...) asparagine glycosylation occurs at Asn-363. A helical membrane pass occupies residues 590 to 610 (LPFLFWFSVASLITLFHLFLF). The Cytoplasmic portion of the chain corresponds to 611-634 (KLIYNEYCGPGAKPLFRSKEDPSV).

The protein localises to the membrane. This is an uncharacterized protein from Mus musculus (Mouse).